A 455-amino-acid chain; its full sequence is UDP-N-acetylmuramate--L-alanine ligase (455 aa).

An ATP-binding site is contributed by 109–115; that stretch reads GTHGKTT.

The protein belongs to the MurCDEF family.

It localises to the cytoplasm. It carries out the reaction UDP-N-acetyl-alpha-D-muramate + L-alanine + ATP = UDP-N-acetyl-alpha-D-muramoyl-L-alanine + ADP + phosphate + H(+). Its pathway is cell wall biogenesis; peptidoglycan biosynthesis. Its function is as follows. Cell wall formation. In Caldicellulosiruptor bescii (strain ATCC BAA-1888 / DSM 6725 / KCTC 15123 / Z-1320) (Anaerocellum thermophilum), this protein is UDP-N-acetylmuramate--L-alanine ligase.